A 348-amino-acid polypeptide reads, in one-letter code: Phosphoribosylformylglycinamidine cyclo-ligase (348 aa).

Belongs to the AIR synthase family.

The protein localises to the cytoplasm. It catalyses the reaction 2-formamido-N(1)-(5-O-phospho-beta-D-ribosyl)acetamidine + ATP = 5-amino-1-(5-phospho-beta-D-ribosyl)imidazole + ADP + phosphate + H(+). Its pathway is purine metabolism; IMP biosynthesis via de novo pathway; 5-amino-1-(5-phospho-D-ribosyl)imidazole from N(2)-formyl-N(1)-(5-phospho-D-ribosyl)glycinamide: step 2/2. The sequence is that of Phosphoribosylformylglycinamidine cyclo-ligase from Ruegeria pomeroyi (strain ATCC 700808 / DSM 15171 / DSS-3) (Silicibacter pomeroyi).